The sequence spans 680 residues: DNA-directed RNA polymerase subunit beta' (680 aa).

Residues Cys69, Cys71, Cys87, and Cys90 each coordinate Zn(2+). Residues Asp489, Asp491, and Asp493 each coordinate Mg(2+).

The protein belongs to the RNA polymerase beta' chain family. RpoC1 subfamily. In terms of assembly, in plastids the minimal PEP RNA polymerase catalytic core is composed of four subunits: alpha, beta, beta', and beta''. When a (nuclear-encoded) sigma factor is associated with the core the holoenzyme is formed, which can initiate transcription. The cofactor is Mg(2+). Zn(2+) serves as cofactor.

It is found in the plastid. The protein localises to the chloroplast. The catalysed reaction is RNA(n) + a ribonucleoside 5'-triphosphate = RNA(n+1) + diphosphate. Functionally, DNA-dependent RNA polymerase catalyzes the transcription of DNA into RNA using the four ribonucleoside triphosphates as substrates. This Citrus sinensis (Sweet orange) protein is DNA-directed RNA polymerase subunit beta'.